The chain runs to 892 residues: Translation initiation factor IF-2 (892 aa).

The tract at residues 88-306 is disordered; it reads KKRTFVKRDP…LQQGFQKPAQ (219 aa). Basic and acidic residues-rich tracts occupy residues 93-159 and 166-216; these read VKRD…KDKV and DMIK…EENK. The segment covering 254-269 has biased composition (basic residues); it reads GRGRNAKAARPAKKGK. Positions 270 to 282 are enriched in basic and acidic residues; that stretch reads HAESKADREEARA. The tr-type G domain maps to 391-560; sequence PRAPVVTIMG…LLQAEVLELK (170 aa). The G1 stretch occupies residues 400-407; that stretch reads GHVDHGKT. A GTP-binding site is contributed by 400–407; sequence GHVDHGKT. A G2 region spans residues 425–429; it reads GITQH. The tract at residues 446 to 449 is G3; that stretch reads DTPG. GTP-binding positions include 446–450 and 500–503; these read DTPGH and NKID. Positions 500-503 are G4; it reads NKID. Positions 536–538 are G5; it reads SAK.

This sequence belongs to the TRAFAC class translation factor GTPase superfamily. Classic translation factor GTPase family. IF-2 subfamily.

It is found in the cytoplasm. In terms of biological role, one of the essential components for the initiation of protein synthesis. Protects formylmethionyl-tRNA from spontaneous hydrolysis and promotes its binding to the 30S ribosomal subunits. Also involved in the hydrolysis of GTP during the formation of the 70S ribosomal complex. The polypeptide is Translation initiation factor IF-2 (Salmonella schwarzengrund (strain CVM19633)).